Consider the following 507-residue polypeptide: Glutamate--tRNA ligase (507 aa).

Residues 14-24 (PSPTGYLHIGG) carry the 'HIGH' region motif. The 'KMSKS' region motif lies at 261-265 (KLSKR). Lys-264 is an ATP binding site.

This sequence belongs to the class-I aminoacyl-tRNA synthetase family. Glutamate--tRNA ligase type 1 subfamily. In terms of assembly, monomer.

The protein localises to the cytoplasm. It carries out the reaction tRNA(Glu) + L-glutamate + ATP = L-glutamyl-tRNA(Glu) + AMP + diphosphate. Catalyzes the attachment of glutamate to tRNA(Glu) in a two-step reaction: glutamate is first activated by ATP to form Glu-AMP and then transferred to the acceptor end of tRNA(Glu). The protein is Glutamate--tRNA ligase of Roseiflexus castenholzii (strain DSM 13941 / HLO8).